Consider the following 169-residue polypeptide: Phycobiliprotein beta chain (169 aa).

Asn72 is modified (N4-methylasparagine). (2R,3E)-phycocyanobilin is bound at residue Cys82.

Belongs to the phycobiliprotein family. Heterodimer of an alpha and a beta chain. Contains one covalently linked bilin chromophore.

The protein localises to the cellular thylakoid membrane. Its function is as follows. Light-harvesting photosynthetic bile pigment-protein from the phycobiliprotein complex. This is a protein functionally equivalent to, but with weaker absorbance than, allophycocyanin beta chain. This chain is Phycobiliprotein beta chain (apcD), found in Mastigocladus laminosus (Fischerella sp.).